A 140-amino-acid chain; its full sequence is Large ribosomal subunit protein bL19 (140 aa).

Residues 113–126 (RIAERQDRTADGKI) are compositionally biased toward basic and acidic residues. The tract at residues 113–140 (RIAERQDRTADGKIKKGGKSAPAPTAAE) is disordered.

Belongs to the bacterial ribosomal protein bL19 family.

Its function is as follows. This protein is located at the 30S-50S ribosomal subunit interface and may play a role in the structure and function of the aminoacyl-tRNA binding site. This Xanthobacter autotrophicus (strain ATCC BAA-1158 / Py2) protein is Large ribosomal subunit protein bL19.